The following is a 582-amino-acid chain: Hydrazine dehydrogenase (582 aa).

A signal peptide spans 1–32; the sequence is MRKFLKVTLASALIGCGVIGTVSSLMVKEAKA. Positions 121, 124, 125, 141, 151, 154, 155, 159, 170, 175, 176, 191, 216, 219, 220, 227, 230, 231, 234, 247, 250, 251, 267, 297, 300, 301, 306, 342, 345, 346, 454, and 462 each coordinate heme c. The interval 561–582 is disordered; sequence GSHSAHHHESGHDPAARSMKEH. Residues 567 to 582 show a composition bias toward basic and acidic residues; it reads HHESGHDPAARSMKEH.

Homotrimer; subunits are linked by two covalent bonds between Tyr-462 of one subunit and heme P460 of an adjacent subunit. May form 24-mer of an octamer of trimers. Heme c is required as a cofactor.

Its subcellular location is the anammoxosome. It catalyses the reaction hydrazine + 4 Fe(III)-[cytochrome c] = N2 + 4 Fe(II)-[cytochrome c] + 4 H(+). It functions in the pathway nitrogen metabolism. Is strongly and competitively inhibited by NO and hydroxylamine. Functionally, catalyzes the four-electron oxidation of hydrazine to N2. The electrons derived from hydrazine oxidation may be transferred to the quinone pool and exploited to promote the generation of proton-motive force (pmf) across the anammoxosome membrane. Is involved in anaerobic ammonium oxidation (anammox), a biological process in which nitrite is used as the electron acceptor in the conversion of ammonium to dinitrogen gas (N2) and water; this bacterial process has a major role in the Earth's nitrogen cycle and has been estimated to synthesize up to 50% of the dinitrogen gas emitted into our atmosphere from the oceans. Cannot oxidize hydroxylamine to NO. In Kuenenia stuttgartiensis, this protein is Hydrazine dehydrogenase.